A 326-amino-acid chain; its full sequence is tRNA-modifying protein YgfZ (326 aa).

Folate-binding residues include Trp-27 and Trp-189.

Belongs to the tRNA-modifying YgfZ family.

It localises to the cytoplasm. Its function is as follows. Folate-binding protein involved in regulating the level of ATP-DnaA and in the modification of some tRNAs. It is probably a key factor in regulatory networks that act via tRNA modification, such as initiation of chromosomal replication. The polypeptide is tRNA-modifying protein YgfZ (Escherichia coli O7:K1 (strain IAI39 / ExPEC)).